We begin with the raw amino-acid sequence, 257 residues long: Zinc transporter ZupT (257 aa).

A run of 3 helical transmembrane segments spans residues 5–25 (LILT…GVLG), 32–52 (LLAF…LMEM), and 61–81 (GMSP…YFGL). Residues N120 and E123 each contribute to the Fe(2+) site. Zn(2+)-binding residues include E123 and H148. The next 4 membrane-spanning stretches (helical) occupy residues 137–157 (LGFG…LAVA), 171–191 (ILWA…AWLI), 195–215 (MISP…MVAL), and 236–256 (GVLC…TVGI). N149, E152, and E181 together coordinate Fe(2+). E152 contacts Zn(2+).

Belongs to the ZIP transporter (TC 2.A.5) family. ZupT subfamily.

The protein localises to the cell inner membrane. It carries out the reaction Zn(2+)(in) = Zn(2+)(out). Functionally, mediates zinc uptake. May also transport other divalent cations. This Escherichia coli O81 (strain ED1a) protein is Zinc transporter ZupT.